The primary structure comprises 66 residues: DNA-binding protein 7d (66 aa).

Residues Lys5 and Lys7 each carry the N6-methyllysine; partial modification.

Belongs to the 7 kDa DNA-binding/endoribonuclease P2 family. In terms of assembly, monomer. Post-translationally, lys-5 was 70% monomethylated in form 7a, 25% in form 7b, and 20% in form 7d. Lys-7 was 50% monomethylated in form 7a, 40% in form 7b, and 50% in form 7d.

The protein localises to the cytoplasm. Functionally, can constrain negative DNA supercoils. May be involved in maintaining the integrity of the genome at high temperature. The polypeptide is DNA-binding protein 7d (Sulfolobus acidocaldarius (strain ATCC 33909 / DSM 639 / JCM 8929 / NBRC 15157 / NCIMB 11770)).